Consider the following 914-residue polypeptide: Serine/threonine-protein kinase MST20 (914 aa).

Positions 1-12 (MDGHSNFTQPSD) are enriched in polar residues. 3 disordered regions span residues 1–140 (MDGH…QLQN), 156–184 (NQYS…LTFN), and 251–286 (AMSE…VLRK). Low complexity-rich tracts occupy residues 13 to 26 (TSHA…SSSS), 63 to 72 (RSSTSLRRAP), and 79 to 97 (TPTS…PSSS). A compositionally biased stretch (basic and acidic residues) spans 122 to 136 (ARDRDSDPARNDHGH). A compositionally biased stretch (basic residues) spans 156 to 166 (NQYSAASHRRS). The segment covering 175 to 184 (PQSSNSLTFN) has biased composition (polar residues). The span at 271 to 280 (RYSDETKEPK) shows a compositional bias: basic and acidic residues. In terms of domain architecture, CRIB spans 306–319 (ISAPENPVHVTHVG). Positions 408–615 (SPMISPPASP…RHRSRQSNGL (208 aa)) are disordered. 2 stretches are compositionally biased toward low complexity: residues 516–548 (AYPA…QAQA) and 562–576 (QPQA…SQHQ). The segment covering 577 to 586 (YSRPTDANGA) has biased composition (polar residues). The segment covering 587–596 (QQTQRPQQPQ) has biased composition (low complexity). The Protein kinase domain maps to 634–885 (YRSFTKIGQG…AHDLLRHEFM (252 aa)). Residues 640–648 (IGQGASGGV) and Lys663 each bind ATP. The active-site Proton acceptor is the Asp753.

It belongs to the protein kinase superfamily. STE Ser/Thr protein kinase family. STE20 subfamily.

It localises to the cytoplasm. Its subcellular location is the nucleus. It catalyses the reaction L-seryl-[protein] + ATP = O-phospho-L-seryl-[protein] + ADP + H(+). The catalysed reaction is L-threonyl-[protein] + ATP = O-phospho-L-threonyl-[protein] + ADP + H(+). In terms of biological role, MAP4K component of the MAPK pathway required for the mating pheromone response and the regulation of cell polarity and cell cycle. Phosphorylates histone H2B to form H2BS10ph. Is involved in conidiation, aerial hyphal growth and infection-related morphogenesis. This chain is Serine/threonine-protein kinase MST20 (MST20), found in Pyricularia oryzae (strain 70-15 / ATCC MYA-4617 / FGSC 8958) (Rice blast fungus).